The following is a 564-amino-acid chain: Isopullulanase (564 aa).

Positions 1–19 (MRSTGYLLTLSAAFQVAQA) are cleaved as a signal peptide. 15 N-linked (GlcNAc...) asparagine glycosylation sites follow: Asn-24, Asn-94, Asn-115, Asn-138, Asn-186, Asn-210, Asn-305, Asn-381, Asn-448, Asn-455, Asn-460, Asn-486, Asn-491, Asn-503, and Asn-535.

N-glycosylated.

It is found in the secreted. The enzyme catalyses Hydrolysis of pullulan to isopanose (6-alpha-maltosylglucose).. Functionally, hydrolyzes pullulan, a linear polymer which is composed of maltotriose units with alpha-1,6 glucosidic linkages, to produce isopanose (Glca1-4Glca1-6Glc). The chain is Isopullulanase (ipuA) from Aspergillus niger.